Reading from the N-terminus, the 405-residue chain is L-carnitine CoA-transferase (405 aa).

Residues Lys-97 and Arg-104 each contribute to the CoA site. Catalysis depends on Asp-169, which acts as the Nucleophile.

This sequence belongs to the CoA-transferase III family. CaiB subfamily. Homodimer.

It localises to the cytoplasm. It carries out the reaction crotonobetainyl-CoA + (R)-carnitine = crotonobetaine + (R)-carnitinyl-CoA. The enzyme catalyses 4-(trimethylamino)butanoyl-CoA + (R)-carnitine = (R)-carnitinyl-CoA + 4-(trimethylamino)butanoate. It participates in amine and polyamine metabolism; carnitine metabolism. Catalyzes the reversible transfer of the CoA moiety from gamma-butyrobetainyl-CoA to L-carnitine to generate L-carnitinyl-CoA and gamma-butyrobetaine. Is also able to catalyze the reversible transfer of the CoA moiety from gamma-butyrobetainyl-CoA or L-carnitinyl-CoA to crotonobetaine to generate crotonobetainyl-CoA. The sequence is that of L-carnitine CoA-transferase (caiB) from Salmonella typhi.